The primary structure comprises 218 residues: Peptidyl-prolyl cis-trans isomerase FKBP7 (218 aa).

A signal peptide spans 1–19 (MNLLFRLAVFLSLWCCSDA). 2 N-linked (GlcNAc...) asparagine glycosylation sites follow: asparagine 41 and asparagine 128. The PPIase FKBP-type domain occupies 49 to 141 (GDLLNAHYDG…MFEIELYAVT (93 aa)). 2 EF-hand domains span residues 141-176 (TKGP…DFEK) and 185-218 (YQKA…HDEL). Aspartate 154, aspartate 156, aspartate 158, glutamine 160, glutamate 165, aspartate 198, asparagine 200, aspartate 202, and glutamate 209 together coordinate Ca(2+). Positions 197-218 (NDHNGDGFISPKEYNVHQHDEL) are disordered. Positions 215–218 (HDEL) match the Prevents secretion from ER motif.

In terms of processing, glycosylated. Expressed at highest levels in heart, lung and testis. Weakly expressed in kidney and lymph node. Little or no expression detected in brain, thymus, spleen and liver.

The protein resides in the endoplasmic reticulum lumen. It catalyses the reaction [protein]-peptidylproline (omega=180) = [protein]-peptidylproline (omega=0). PPIases accelerate the folding of proteins during protein synthesis. In Mus musculus (Mouse), this protein is Peptidyl-prolyl cis-trans isomerase FKBP7 (Fkbp7).